A 288-amino-acid chain; its full sequence is NGG1-interacting factor 3 (288 aa).

It belongs to the GTP cyclohydrolase I type 2/NIF3 family. As to quaternary structure, may interact with NGG1.

The protein resides in the mitochondrion. The polypeptide is NGG1-interacting factor 3 (Saccharomyces cerevisiae (strain ATCC 204508 / S288c) (Baker's yeast)).